The following is a 206-amino-acid chain: Large ribosomal subunit protein uL13 (206 aa).

This sequence belongs to the universal ribosomal protein uL13 family.

The protein is Large ribosomal subunit protein uL13 (RPL13A) of Picea mariana (Black spruce).